The chain runs to 691 residues: Elongation factor G (691 aa).

The 276-residue stretch at 8-283 (EDYRNFGIMA…AVVDYLPSPA (276 aa)) folds into the tr-type G domain. GTP-binding positions include 17-24 (AHIDAGKT), 81-85 (DTPGH), and 135-138 (NKMD).

The protein belongs to the TRAFAC class translation factor GTPase superfamily. Classic translation factor GTPase family. EF-G/EF-2 subfamily.

It localises to the cytoplasm. Functionally, catalyzes the GTP-dependent ribosomal translocation step during translation elongation. During this step, the ribosome changes from the pre-translocational (PRE) to the post-translocational (POST) state as the newly formed A-site-bound peptidyl-tRNA and P-site-bound deacylated tRNA move to the P and E sites, respectively. Catalyzes the coordinated movement of the two tRNA molecules, the mRNA and conformational changes in the ribosome. This chain is Elongation factor G, found in Methylobacterium sp. (strain 4-46).